The primary structure comprises 340 residues: MELAYIPSPARGVLYLGPIPLRGYAFCIIIGVFVAVWLGNKRWVARGGRPGTVADIAVWAVPFGLVGGRLYHVITDYELYFSEGRDWVDAFKIWEGGLGIWGAIALGAVGAWIGCRRRGIPLPAWADAVAPGIAFAQAFGRWGNWFNQELYGRETHVPWALHITSSTDGRVPGYYHPTFLYESLWCVGVGFLVIWADRRFKLGHGRAFALYVAAYCVGRAWIEYMRVDDAHHILGVRLNDWTAIAVFLLAVLYIVLSSRKRPGREEIVEPGASDTGTGADDPVDLGKDEDKATTDKATATDTSTTTDKSTDRGKNEDENEGEDAEPSEKTESAAESAKKV.

4 helical membrane passes run 19-39, 54-74, 93-113, and 119-139; these read IPLRGYAFCIIIGVFVAVWLG, ADIAVWAVPFGLVGGRLYHVI, IWEGGLGIWGAIALGAVGAWI, and GIPLPAWADAVAPGIAFAQAF. Arg141 contributes to the a 1,2-diacyl-sn-glycero-3-phospho-(1'-sn-glycerol) binding site. 3 consecutive transmembrane segments (helical) span residues 176-196, 202-221, and 238-258; these read HPTFLYESLWCVGVGFLVIWA, LGHGRAFALYVAAYCVGRAW, and LNDWTAIAVFLLAVLYIVLSS. A disordered region spans residues 266-340; the sequence is EIVEPGASDT…ESAAESAKKV (75 aa). Positions 284–294 are enriched in basic and acidic residues; it reads DLGKDEDKATT. A compositionally biased stretch (low complexity) spans 295-307; sequence DKATATDTSTTTD. Residues 326 to 340 are compositionally biased toward basic and acidic residues; sequence PSEKTESAAESAKKV.

This sequence belongs to the Lgt family.

The protein localises to the cell membrane. The enzyme catalyses L-cysteinyl-[prolipoprotein] + a 1,2-diacyl-sn-glycero-3-phospho-(1'-sn-glycerol) = an S-1,2-diacyl-sn-glyceryl-L-cysteinyl-[prolipoprotein] + sn-glycerol 1-phosphate + H(+). It participates in protein modification; lipoprotein biosynthesis (diacylglyceryl transfer). Catalyzes the transfer of the diacylglyceryl group from phosphatidylglycerol to the sulfhydryl group of the N-terminal cysteine of a prolipoprotein, the first step in the formation of mature lipoproteins. In Streptomyces avermitilis (strain ATCC 31267 / DSM 46492 / JCM 5070 / NBRC 14893 / NCIMB 12804 / NRRL 8165 / MA-4680), this protein is Phosphatidylglycerol--prolipoprotein diacylglyceryl transferase.